We begin with the raw amino-acid sequence, 380 residues long: MARPWTFGIEEEYLLADTTSGQVLASPSPAVTRRCREMLGATFAEEMFLSQIEVVSPVFDSLHQARSFLGENRQRLGEALGDFGVGLYGAASHPCAQWLRQHPRGTAHFRQLFDDYRLVARRSLVNGLHVHVGVPAGTDRMQLINRVLYWLPLFLVLSTSSPLWGGQDTGYMSYRRVICGEWPHMGLPEPLADWHAYQRYRGLLQRTGALAEDGDFWWAIRPSRRFPTVELRICDGCPRLEDGLAIAGLYRHLVQHALARHDGMAVSREIRWITQENYWRAARYGRRGTFIGAVDQQPVSAEGWLAQLQSWLPADSAEAERSFMQARRILREGTSADRQREAYALARENGLAGREALRAVARQVMAEHFPGAGLPQGEIE.

The protein belongs to the glutamate--cysteine ligase type 2 family. YbdK subfamily.

The enzyme catalyses L-cysteine + L-glutamate + ATP = gamma-L-glutamyl-L-cysteine + ADP + phosphate + H(+). Functionally, ATP-dependent carboxylate-amine ligase which exhibits weak glutamate--cysteine ligase activity. The polypeptide is Putative glutamate--cysteine ligase 2 (Pseudomonas entomophila (strain L48)).